Reading from the N-terminus, the 833-residue chain is Serine/threonine-protein phosphatase 4 regulatory subunit 3A (833 aa).

Residues 1–100 form the WH1 domain; that stretch reads MTDTRRRVKV…DEIWEKICQV (100 aa). 2 positions are modified to phosphoserine: serine 117 and serine 127. Position 655 is an N6-acetyllysine (lysine 655). The segment covering 683–694 has biased composition (acidic residues); the sequence is FNTDEDDMEDGE. Disordered regions lie at residues 683 to 712 and 733 to 833; these read FNTDEDDMEDGEAVVSPSDKTKNDDDIMDP and KTNL…KFDS. Serine 698, serine 741, serine 768, serine 771, serine 774, serine 777, and serine 780 each carry phosphoserine. A compositionally biased stretch (polar residues) spans 734-751; that stretch reads TNLSGRQSPSFKLSLSSG. The segment covering 752–768 has biased composition (low complexity); that stretch reads TKTNLTSQSSTTNLPGS. A compositionally biased stretch (polar residues) spans 785-794; the sequence is PKNTSQTAAI. A compositionally biased stretch (acidic residues) spans 806–820; that stretch reads YPDDDEDDDEDEDKE.

This sequence belongs to the SMEK family. In terms of assembly, serine/threonine-protein phosphatase 4 (PP4) occurs in different assemblies of the catalytic and one or more regulatory subunits. Component of the PP4 complex PPP4C-PPP4R2-PPP4R3A. Interacts with PPP4C; the interaction requires PPP4R2.

The protein resides in the cytoplasm. The protein localises to the cytoskeleton. It localises to the microtubule organizing center. Its subcellular location is the centrosome. It is found in the nucleus. Its function is as follows. Regulatory subunit of serine/threonine-protein phosphatase 4. May regulate the activity of PPP4C at centrosomal microtubule organizing centers. The PPP4C-PPP4R2-PPP4R3A PP4 complex specifically dephosphorylates H2AX phosphorylated on 'Ser-140' (gamma-H2AX) generated during DNA replication and required for DNA DSB repair. The protein is Serine/threonine-protein phosphatase 4 regulatory subunit 3A of Homo sapiens (Human).